We begin with the raw amino-acid sequence, 1014 residues long: Valine--tRNA ligase (1014 aa).

The 'HIGH' region motif lies at 49 to 59 (PNVTGSLHMGH). Positions 542-546 (KMSKS) match the 'KMSKS' region motif. K545 is an ATP binding site. The stretch at 947-1014 (VVDIETLRAK…ILRLRLQTLV (68 aa)) forms a coiled coil.

It belongs to the class-I aminoacyl-tRNA synthetase family. ValS type 1 subfamily. Monomer.

The protein resides in the cytoplasm. It catalyses the reaction tRNA(Val) + L-valine + ATP = L-valyl-tRNA(Val) + AMP + diphosphate. In terms of biological role, catalyzes the attachment of valine to tRNA(Val). As ValRS can inadvertently accommodate and process structurally similar amino acids such as threonine, to avoid such errors, it has a 'posttransfer' editing activity that hydrolyzes mischarged Thr-tRNA(Val) in a tRNA-dependent manner. The chain is Valine--tRNA ligase from Nostoc sp. (strain PCC 7120 / SAG 25.82 / UTEX 2576).